The sequence spans 99 residues: UPF0213 protein RBAM_000440 (99 aa).

Residues 4–79 (NSHFFYVLLC…KQLTRKKKEQ (76 aa)) form the GIY-YIG domain.

Belongs to the UPF0213 family.

The protein is UPF0213 protein RBAM_000440 of Bacillus velezensis (strain DSM 23117 / BGSC 10A6 / LMG 26770 / FZB42) (Bacillus amyloliquefaciens subsp. plantarum).